We begin with the raw amino-acid sequence, 336 residues long: Ribose-phosphate pyrophosphokinase 1 (336 aa).

Residues aspartate 150, histidine 152, aspartate 161, and aspartate 165 each coordinate Mg(2+). The segment at glycine 236–threonine 251 is binding of phosphoribosylpyrophosphate.

This sequence belongs to the ribose-phosphate pyrophosphokinase family.

It carries out the reaction D-ribose 5-phosphate + ATP = 5-phospho-alpha-D-ribose 1-diphosphate + AMP + H(+). The chain is Ribose-phosphate pyrophosphokinase 1 (PRS1) from Spinacia oleracea (Spinach).